Reading from the N-terminus, the 72-residue chain is Guanine nucleotide-binding protein subunit gamma (72 aa).

The tract at residues 32 to 72 (MVSVAPPKANPSVSSKTKQQQHFKPGKATKDKATTKCCTIS) is disordered. Cys-68 carries S-palmitoyl cysteine lipidation. Cys-69 carries the cysteine methyl ester modification. The S-farnesyl cysteine moiety is linked to residue Cys-69. Residues 70–72 (TIS) constitute a propeptide, removed in mature form.

The protein belongs to the G protein gamma family. As to quaternary structure, g proteins are composed of 3 units, alpha, beta and gamma. Binding of the beta-gamma subunit complex (git5-git11) to the alpha subunit (gpa2) facilitates interaction with GPCR git3.

The protein localises to the cell membrane. Functionally, gamma subunit of the heterotrimeric guanine nucleotide-binding protein (G protein) involved in glucose-induced cAMP signaling. The beta-gamma subunits (git5-git11) promote binding of the alpha subunit gpa2 to GPCR git3, which senses extracellular glucose, to activate cAMP-PKA signaling and repress sexual development and gluconeogenesis. This chain is Guanine nucleotide-binding protein subunit gamma (git11), found in Schizosaccharomyces pombe (strain 972 / ATCC 24843) (Fission yeast).